The sequence spans 90 residues: Albumin (90 aa).

Residue serine 5 is modified to Phosphoserine. Ca(2+) contacts are provided by glutamate 6 and aspartate 13. The region spanning 25–90 is the Albumin domain; the sequence is LLRHLVDEPQ…LVASTQAALA (66 aa). The residue at position 61 (serine 61) is a Phosphoserine. A phosphothreonine mark is found at threonine 62 and threonine 64. Position 80 is an N6-methyllysine (lysine 80).

Belongs to the ALB/AFP/VDB family. In terms of assembly, interacts with FCGRT; this interaction regulates ALB homeostasis. Interacts with TASOR. In plasma, occurs in a covalently-linked complex with chromophore-bound alpha-1-microglobulin; this interaction does not prevent fatty acid binding to ALB. As to expression, plasma.

The protein resides in the secreted. Its function is as follows. Binds water, Ca(2+), Na(+), K(+), fatty acids, hormones, bilirubin and drugs. Its main function is the regulation of the colloidal osmotic pressure of blood. Major zinc transporter in plasma, typically binds about 80% of all plasma zinc. Major calcium and magnesium transporter in plasma, binds approximately 45% of circulating calcium and magnesium in plasma. Potentially has more than two calcium-binding sites and might additionally bind calcium in a non-specific manner. The shared binding site between zinc and calcium suggests a crosstalk between zinc and calcium transport in the blood. The rank order of affinity is zinc &gt; calcium &gt; magnesium. Binds to the bacterial siderophore enterobactin and inhibits enterobactin-mediated iron uptake of E.coli from ferric transferrin, and may thereby limit the utilization of iron and growth of enteric bacteria such as E.coli. Does not prevent iron uptake by the bacterial siderophore aerobactin. This Capra hircus (Goat) protein is Albumin.